The chain runs to 513 residues: ATP synthase subunit alpha (513 aa).

169 to 176 contributes to the ATP binding site; sequence GDRQTGKT.

It belongs to the ATPase alpha/beta chains family. As to quaternary structure, F-type ATPases have 2 components, CF(1) - the catalytic core - and CF(0) - the membrane proton channel. CF(1) has five subunits: alpha(3), beta(3), gamma(1), delta(1), epsilon(1). CF(0) has three main subunits: a(1), b(2) and c(9-12). The alpha and beta chains form an alternating ring which encloses part of the gamma chain. CF(1) is attached to CF(0) by a central stalk formed by the gamma and epsilon chains, while a peripheral stalk is formed by the delta and b chains.

The protein localises to the cell inner membrane. The enzyme catalyses ATP + H2O + 4 H(+)(in) = ADP + phosphate + 5 H(+)(out). In terms of biological role, produces ATP from ADP in the presence of a proton gradient across the membrane. The alpha chain is a regulatory subunit. The polypeptide is ATP synthase subunit alpha (Histophilus somni (strain 2336) (Haemophilus somnus)).